The following is a 443-amino-acid chain: Dynein regulatory complex protein 9 (443 aa).

Disordered regions lie at residues 1–34 and 415–443; these read MEED…TVEE and GFKM…GKKK. Residues 393–422 enclose the IQ domain; that stretch reads ELKSVIKLQAWWRGTMIRREIGGFKMPKDK. Positions 415–430 are enriched in basic and acidic residues; the sequence is GFKMPKDKVDSKDSKG. Residues 431 to 443 are compositionally biased toward basic residues; sequence KGKGKDKRRGKKK.

Belongs to the DRC9 family. As to quaternary structure, component of the nexin-dynein regulatory complex (N-DRC). Interacts (via IQ domain) with CALM when calcium levels are low. Does not interact with CALM in the presence of Ca(2+). Interacts with the HSP70 proteins HSPA1L and HSPA8. May form a complex with CAMK4 and HSP70.

It is found in the cytoplasm. The protein resides in the cell projection. The protein localises to the cilium. It localises to the flagellum. Its subcellular location is the cytoskeleton. It is found in the flagellum axoneme. Its function is as follows. Component of the nexin-dynein regulatory complex (N-DRC), a key regulator of ciliary/flagellar motility which maintains the alignment and integrity of the distal axoneme and regulates microtubule sliding in motile axonemes. Binds calmodulin when cellular Ca(2+) levels are low and thereby contributes to the regulation of calcium and calmodulin-dependent protein kinase IV (CAMK4) activity; contributes to the regulation of CAMK4 signaling cascades. Required for normal axoneme assembly in sperm flagella, normal sperm tail formation and for male fertility. The polypeptide is Dynein regulatory complex protein 9 (IQCG) (Homo sapiens (Human)).